The chain runs to 468 residues: MKFTALPFEVGPVHFVGIGGIGMSGIAEVMLNLGYKVQGSDIKANPNVERLTGLGATVAIGHKAANVDGAGAIVVSSAIKPDNPELVAARAAKIPVVRRAEMLAELMRLKFAVAVGGTHGKTTTTSLVAVLMDAAGVDPTVINGGIISAYGSNAKVGLGDWMAVEADESDGSFLKLRSTVAIVTNIDPEHMEHYGTFDVLRQAFFQFVENLPFYGFAVLCTDHPEVQSLASRVEDRRVITYGQNPQADARLENLKMDPSGATFDVRFRLRGQDETVWRDIFLPMMGEHNVLNAVAALATARELGLTEAGAKTALGQFGGVKRRFTRTGEWKGAAIIDDYGHHPVEIAAVLKAARQAATGKVIAVMQPHRYSRLHDLFDDFSTCFNDADSVLVTPVYTAGEDPIEGADQAHLVESLRSHGHRDAGATTRDAVAADVAKRAGEGDVVVCLGAGDITLWAYALPGELEALG.

117 to 123 (GTHGKTT) contacts ATP.

The protein belongs to the MurCDEF family.

The protein resides in the cytoplasm. It carries out the reaction UDP-N-acetyl-alpha-D-muramate + L-alanine + ATP = UDP-N-acetyl-alpha-D-muramoyl-L-alanine + ADP + phosphate + H(+). Its pathway is cell wall biogenesis; peptidoglycan biosynthesis. Its function is as follows. Cell wall formation. The protein is UDP-N-acetylmuramate--L-alanine ligase of Maricaulis maris (strain MCS10) (Caulobacter maris).